The primary structure comprises 564 residues: Keratin, type II cytoskeletal 6C (564 aa).

Residues 1 to 11 are compositionally biased toward low complexity; the sequence is MASTSTTIRSH. The disordered stretch occupies residues 1 to 23; sequence MASTSTTIRSHSSSRRGFSANSA. Residue A2 is modified to N-acetylalanine. The interval 2 to 162 is head; that stretch reads ASTSTTIRSH…DPAIQRVRAE (161 aa). Residue S60 is modified to Phosphoserine. Residues 163–198 are coil 1A; it reads EREQIKTLNNKFASFIDKVRFLEQQNKVLDTKWTLL. Residues 163–476 enclose the IF rod domain; that stretch reads EREQIKTLNN…KLLEGEECRL (314 aa). The interval 199–217 is linker 1; sequence QEQGTKTVRQNLEPLFEQY. Residues 218–309 are coil 1B; it reads INNLRRQLDS…ALYDAELSQM (92 aa). Residues 310–333 form a linker 12 region; the sequence is QTHISDTSVVLSMDNNRNLDLDSI. The tract at residues 334-472 is coil 2; the sequence is IAEVKAQYEE…ATYRKLLEGE (139 aa). Positions 473–564 are tail; it reads ECRLNGEGVG…SSSSRKSYKH (92 aa).

This sequence belongs to the intermediate filament family. As to quaternary structure, heterodimer of a type I and a type II keratin. KRT6 isomers associate with KRT16 and/or KRT17. In terms of tissue distribution, constitutively expressed in distinct types of epithelia such as those in oral mucosa, esophagus, papillae of tongue and hair follicle outer root sheath.

The sequence is that of Keratin, type II cytoskeletal 6C (KRT6C) from Homo sapiens (Human).